Reading from the N-terminus, the 245-residue chain is tRNA pseudouridine synthase A (245 aa).

Aspartate 52 (nucleophile) is an active-site residue. Tyrosine 111 is a substrate binding site.

It belongs to the tRNA pseudouridine synthase TruA family. As to quaternary structure, homodimer.

The catalysed reaction is uridine(38/39/40) in tRNA = pseudouridine(38/39/40) in tRNA. Formation of pseudouridine at positions 38, 39 and 40 in the anticodon stem and loop of transfer RNAs. The protein is tRNA pseudouridine synthase A of Rhodopseudomonas palustris (strain BisB5).